The primary structure comprises 249 residues: 3-deoxy-D-manno-octulosonic acid kinase (249 aa).

Residue Asp175 is part of the active site.

It belongs to the protein kinase superfamily. KdkA/RfaP family.

It localises to the cell inner membrane. It catalyses the reaction an alpha-Kdo-(2-&gt;6)-lipid IVA + ATP = a 4-O-phospho-alpha-Kdo-(2-&gt;6)-lipid IVA + ADP + H(+). It functions in the pathway bacterial outer membrane biogenesis; LPS core biosynthesis. Catalyzes the ATP-dependent phosphorylation of the 3-deoxy-D-manno-octulosonic acid (Kdo) residue in Kdo-lipid IV(A) at the 4-OH position. The chain is 3-deoxy-D-manno-octulosonic acid kinase from Xylella fastidiosa (strain M23).